Here is a 784-residue protein sequence, read N- to C-terminus: MFDVLSDDLMQKMDAYWRAANYLSVGQIYLQDNPLLEQPLRIEHIKPRLLGHWGTTPGLNLLYVHLNRLISAHDLDMIYIIGPGHGGPGLVANSYLEGSYTERYPAIERNRNGLQRLFRQFSWPNGVPSHVSPETPGSIHEGGELGYSLAHAYGAAFDNPDLIVACIVGDGEAETGALATSWHSNKFLNPARDGAVLPILHLNGFKIANPTILARIGRQELTDLMRGYGYEPIVVEGDDPKLVHHTLAAALERALADIRAIQAAARHQGVTVRPRWPMIILRTPKGWTGPKQVDGKQIEGTWRAHQVPIASFKDPTHVQLLETWLRSYRPEELFDASGKFRDDLAALAPTGHRRMSANPHANGGELLQPLSLPDFHDYAVTQSGPGTVKAEATRVLGAFLRDVMKSNLDAKNFRLFGPDETASNRLDAVLEVTDKEWMAEIEDVDVALGPDGRVMEVLSEHLCQGWLEGYLLTGRHGFFSCYEAFIHIVGSMFNQHAKWLKTCDAIPWRRPIASLNYLLTSHVWRQDHNGLSHQDPGFIDHVVNKKASVVRVYLPPDANCLLSVADHCLRSRNYVNLIVAGKQPEWQWLDIDSAVRHCSAGAGIWHWASNGEDDPDVVMACAGDVPTLETLAAVMLLREYVPDIRVRVVNVVDLMVLQPSSEHPHGLDDKRFDEIFTVDKPVVFAFHGYPWLIHRLTYRRRNHFNIHVRGYKEEGSTTTPFDMVVLNDLDRYRLALDAIRRIPRLAGEVEAATARYWATMQRHKLYIGEHGDDMPEVRDWSWQG.

This sequence belongs to the XFP family. Thiamine diphosphate serves as cofactor.

The polypeptide is Probable phosphoketolase (Rhodopseudomonas palustris (strain BisB5)).